Consider the following 435-residue polypeptide: Transcription factor gkaF (435 aa).

The span at 1–19 shows a compositional bias: basic and acidic residues; the sequence is MGRPQRGDTAKERRERQDK. 3 disordered regions span residues 1-40, 115-158, and 231-257; these read MGRP…TVDW, STTA…SSQS, and FSSE…FLAP. The segment covering 28–40 has biased composition (polar residues); the sequence is PISQSGLSDTVDW. A compositionally biased stretch (low complexity) spans 143–158; sequence SQSSDSSKPSSTSSQS.

Its subcellular location is the nucleus. Functionally, transcription factor; part of the gene cluster that mediates the biosynthesis of GKK1032, fungal natural products containing a macrocyclic para-cyclophane connected to a decahydrofluorene ring system that show potent antitumor activities. The chain is Transcription factor gkaF from Penicillium citrinum.